The chain runs to 127 residues: Aspartate 1-decarboxylase (127 aa).

The Schiff-base intermediate with substrate; via pyruvic acid role is filled by Ser25. Ser25 carries the pyruvic acid (Ser) modification. Thr57 contacts substrate. The active-site Proton donor is the Tyr58. Gly73–Ala75 provides a ligand contact to substrate.

The protein belongs to the PanD family. As to quaternary structure, heterooctamer of four alpha and four beta subunits. Pyruvate serves as cofactor. Is synthesized initially as an inactive proenzyme, which is activated by self-cleavage at a specific serine bond to produce a beta-subunit with a hydroxyl group at its C-terminus and an alpha-subunit with a pyruvoyl group at its N-terminus.

It localises to the cytoplasm. The catalysed reaction is L-aspartate + H(+) = beta-alanine + CO2. The protein operates within cofactor biosynthesis; (R)-pantothenate biosynthesis; beta-alanine from L-aspartate: step 1/1. Catalyzes the pyruvoyl-dependent decarboxylation of aspartate to produce beta-alanine. In Dechloromonas aromatica (strain RCB), this protein is Aspartate 1-decarboxylase.